Reading from the N-terminus, the 282-residue chain is Large ribosomal subunit protein uL4c (282 aa).

The transit peptide at 1-43 directs the protein to the chloroplast; sequence MAASLSFFSSSIFLSNPNIQSSKHLLFRSPKQLSVAAIATIRS. Disordered stretches follow at residues 86–133 and 251–282; these read RNQR…GGVV and RYGDENEWEDEEEDDQEDNDGGEAEESTESSE. Residues 255-282 show a composition bias toward acidic residues; the sequence is ENEWEDEEEDDQEDNDGGEAEESTESSE.

Belongs to the universal ribosomal protein uL4 family. In terms of assembly, part of the 50S ribosomal subunit.

The protein resides in the plastid. The protein localises to the chloroplast. Functionally, this protein binds directly and specifically to 23S rRNA. May play a role in plastid transcriptional regulation. This chain is Large ribosomal subunit protein uL4c (RPL4), found in Nicotiana tabacum (Common tobacco).